Reading from the N-terminus, the 49-residue chain is uncharacterized protein (49 aa).

The chain crosses the membrane as a helical span at residues 23 to 43; the sequence is LYVISFVLFIVLFFGMFFKLI.

It localises to the host membrane. This is an uncharacterized protein from Spiroplasma melliferum (SpV1).